Reading from the N-terminus, the 363-residue chain is NAD(P)H-quinone oxidoreductase subunit 1, chloroplastic (363 aa).

6 helical membrane passes run 30–50, 98–118, 129–149, 248–268, 300–320, and 336–356; these read LVPIFTPVLGITIGVLAIVWL, FSIGPSIAVISILLSYLIIPF, IGVFLWIAISSIAPIGLLMSG, YSGIKFGLFYVASYLNLLVSS, VFGTTIGIFITLAKTYLFLFI, and LLNLGWKFLLPISLGNLLLTT.

Belongs to the complex I subunit 1 family. In terms of assembly, NDH is composed of at least 16 different subunits, 5 of which are encoded in the nucleus.

It is found in the plastid. Its subcellular location is the chloroplast thylakoid membrane. The catalysed reaction is a plastoquinone + NADH + (n+1) H(+)(in) = a plastoquinol + NAD(+) + n H(+)(out). It carries out the reaction a plastoquinone + NADPH + (n+1) H(+)(in) = a plastoquinol + NADP(+) + n H(+)(out). Functionally, NDH shuttles electrons from NAD(P)H:plastoquinone, via FMN and iron-sulfur (Fe-S) centers, to quinones in the photosynthetic chain and possibly in a chloroplast respiratory chain. The immediate electron acceptor for the enzyme in this species is believed to be plastoquinone. Couples the redox reaction to proton translocation, and thus conserves the redox energy in a proton gradient. The protein is NAD(P)H-quinone oxidoreductase subunit 1, chloroplastic of Vitis vinifera (Grape).